The chain runs to 372 residues: Lectin/endochitinase 1 (372 aa).

A signal peptide spans 1-23 (MMMRFLSAVVIMSSAMAVGLVSA). Glutamine 24 serves as a coordination point for substrate. Glutamine 24 is subject to Pyrrolidone carboxylic acid. Chitin-binding type-1 domains lie at 24 to 64 (QRCG…KCWS) and 69 to 111 (DHRC…RCSS). 4 cysteine pairs are disulfide-bonded: cysteine 26-cysteine 41, cysteine 35-cysteine 47, cysteine 40-cysteine 54, and cysteine 58-cysteine 62. Residue 42–53 (SIWGWCGDSEPY) participates in substrate binding. A Zn(2+)-binding site is contributed by histidine 70. Cystine bridges form between cysteine 72–cysteine 87, cysteine 81–cysteine 93, cysteine 86–cysteine 100, and cysteine 105–cysteine 109. Histidine 90 contributes to the Zn(2+) binding site. The spacer stretch occupies residues 113 to 128 (VRGPRVALSGNSTANS). N-linked (GlcNAc...) asparagine glycosylation occurs at asparagine 123. Positions 129–372 (IGNVVVTEPL…FQRIQMRVAA (244 aa)) are chitinase.

In terms of assembly, monomer and homodimer. Zinc favors dimerization. Active in the monomeric form but probably inactive in the dimeric form. The interaction with glycans on the mammalian TCR and MHC molecules of the T-cell and antigen-presenting cell, respectively, is inhibited by oligomers of GlcNAc. Post-translationally, proteolytically processed to yield a very small protein (8.5 kDa, 86 AA) containing only the two chitin-binding domains. In terms of tissue distribution, rhizomes and inflorescence with immature seeds.

The catalysed reaction is Random endo-hydrolysis of N-acetyl-beta-D-glucosaminide (1-&gt;4)-beta-linkages in chitin and chitodextrins.. In terms of biological role, functions both as a chitinase and as a N-acetyl-D-glucosamine binding lectin. Inhibits the growth of several phytopathogenic chitin-containing fungi. Also possesses insecticidal activity and superantigenic properties. The protein is Lectin/endochitinase 1 (UDA1) of Urtica dioica (Great nettle).